Consider the following 143-residue polypeptide: Transcriptional regulator MraZ (143 aa).

2 consecutive SpoVT-AbrB domains span residues 5 to 47 (EYHH…PIEE) and 76 to 119 (AMES…SAER).

It belongs to the MraZ family. In terms of assembly, forms oligomers.

The protein localises to the cytoplasm. The protein resides in the nucleoid. The polypeptide is Transcriptional regulator MraZ (Lactobacillus johnsonii (strain CNCM I-12250 / La1 / NCC 533)).